The chain runs to 355 residues: MAGENGLTYAAAGVDIDAGNAMVEAIKPLVRSTRRPGADAEIGGFGGLFDLKAAGFSDPILVAANDGVGTKVKIAIETGRHDTIGIDLVAMCVNDIVVQGAEPLFFLDYYATGKLVPGVGAAIVTGIAEGCRQAGCALIGGETAEMPGLYDGSDYDLAGFAVGAAERGALLPTDGVAPGDLVLGLPSSGVHSNGFSLVRRIVSASGLPWDAPAPFAPGRSLGEALLTPTRIYVRPLLAALRATGRGAIKALAHITGGGFPDNLPRVLPEAVGIALDLDAVAVPPVFGWLARTGGVAVPEMLRTFNCGIGMVVVVAPERIEAVEAALRAAGEAPVRLGTVTPRGEAPVSFAGRLGL.

It belongs to the AIR synthase family.

The protein resides in the cytoplasm. The catalysed reaction is 2-formamido-N(1)-(5-O-phospho-beta-D-ribosyl)acetamidine + ATP = 5-amino-1-(5-phospho-beta-D-ribosyl)imidazole + ADP + phosphate + H(+). It functions in the pathway purine metabolism; IMP biosynthesis via de novo pathway; 5-amino-1-(5-phospho-D-ribosyl)imidazole from N(2)-formyl-N(1)-(5-phospho-D-ribosyl)glycinamide: step 2/2. The protein is Phosphoribosylformylglycinamidine cyclo-ligase of Methylobacterium sp. (strain 4-46).